The primary structure comprises 407 residues: Resuscitation-promoting factor RpfA (407 aa).

A signal peptide spans 1 to 33 (MSGRHRKPTTSNVSVAKIAFTGAVLGGGGIAMA). Disordered regions lie at residues 142–253 (VNGE…ADLA) and 271–371 (LPAA…AETP). Positions 148-159 (PLAPPPADPAPP) are enriched in pro residues. A compositionally biased stretch (low complexity) spans 160–170 (VELAANDLPAP). The span at 171–193 (LGEPLPAAPADPAPPADLAPPAP) shows a compositional bias: pro residues. 2 consecutive repeat copies span residues 178-185 (APADPAPP) and 186-193 (ADLAPPAP). The interval 178-359 (APADPAPPAD…PDPQPADAPP (182 aa)) is 12 X 8 AA approximate repeats of A-P-A-D-L-A-P-P. Residues 194 to 210 (ADVAPPVELAVNDLPAP) are compositionally biased toward low complexity. Pro residues predominate over residues 211 to 249 (LGEPLPAAPADPAPPADLAPPAPADLAPPAPADLAPPAP). 10 consecutive repeat copies span residues 218–225 (APADPAPP), 226–233 (ADLAPPAP), 240–247 (APADLAPP), 248–255 (APADLAPP), 274–281 (APAELAPP), 287–294 (ASADLAPP), 295–302 (APADLAPP), 303–310 (APAELAPP), 311–318 (APADLAPP), and 353–359 (QPADAPP). The span at 274–292 (APAELAPPADLAPASADLA) shows a compositional bias: low complexity. Pro residues-rich tracts occupy residues 293–312 (PPAP…PPAP) and 350–361 (PDPQPADAPPPG).

It belongs to the transglycosylase family. Rpf subfamily.

In terms of biological role, factor that stimulates resuscitation of dormant cells. Has peptidoglycan (PG) hydrolytic activity. The protein is Resuscitation-promoting factor RpfA (rpfA) of Mycobacterium tuberculosis (strain CDC 1551 / Oshkosh).